The primary structure comprises 199 residues: dTTP/UTP pyrophosphatase (199 aa).

The active-site Proton acceptor is Asp-75.

The protein belongs to the Maf family. YhdE subfamily. A divalent metal cation is required as a cofactor.

Its subcellular location is the cytoplasm. It catalyses the reaction dTTP + H2O = dTMP + diphosphate + H(+). The enzyme catalyses UTP + H2O = UMP + diphosphate + H(+). Its function is as follows. Nucleoside triphosphate pyrophosphatase that hydrolyzes dTTP and UTP. May have a dual role in cell division arrest and in preventing the incorporation of modified nucleotides into cellular nucleic acids. This chain is dTTP/UTP pyrophosphatase, found in Methylobacillus flagellatus (strain ATCC 51484 / DSM 6875 / VKM B-1610 / KT).